The sequence spans 151 residues: Nucleoside diphosphate kinase (151 aa).

The ATP site is built by lysine 11, phenylalanine 59, arginine 87, threonine 93, arginine 104, and asparagine 114. Residue histidine 117 is the Pros-phosphohistidine intermediate of the active site.

The protein belongs to the NDK family. As to quaternary structure, homohexamer. Requires Mg(2+) as cofactor.

The catalysed reaction is a 2'-deoxyribonucleoside 5'-diphosphate + ATP = a 2'-deoxyribonucleoside 5'-triphosphate + ADP. It carries out the reaction a ribonucleoside 5'-diphosphate + ATP = a ribonucleoside 5'-triphosphate + ADP. In terms of biological role, major role in the synthesis of nucleoside triphosphates other than ATP. The ATP gamma phosphate is transferred to the NDP beta phosphate via a ping-pong mechanism, using a phosphorylated active-site intermediate. The chain is Nucleoside diphosphate kinase from Ginglymostoma cirratum (Nurse shark).